Here is a 398-residue protein sequence, read N- to C-terminus: 1-deoxy-D-xylulose 5-phosphate reductoisomerase (398 aa).

Threonine 10, glycine 11, serine 12, valine 13, glycine 36, arginine 37, asparagine 38, and asparagine 124 together coordinate NADPH. Position 125 (lysine 125) interacts with 1-deoxy-D-xylulose 5-phosphate. Glutamate 126 contributes to the NADPH binding site. Aspartate 150 is a Mn(2+) binding site. Residues serine 151, glutamate 152, serine 186, and histidine 209 each contribute to the 1-deoxy-D-xylulose 5-phosphate site. Glutamate 152 is a Mn(2+) binding site. Glycine 215 is an NADPH binding site. 1-deoxy-D-xylulose 5-phosphate contacts are provided by serine 222, asparagine 227, lysine 228, and glutamate 231. Glutamate 231 provides a ligand contact to Mn(2+).

The protein belongs to the DXR family. As to quaternary structure, homodimer. Requires Mg(2+) as cofactor. The cofactor is Mn(2+).

It catalyses the reaction 2-C-methyl-D-erythritol 4-phosphate + NADP(+) = 1-deoxy-D-xylulose 5-phosphate + NADPH + H(+). It functions in the pathway isoprenoid biosynthesis; isopentenyl diphosphate biosynthesis via DXP pathway; isopentenyl diphosphate from 1-deoxy-D-xylulose 5-phosphate: step 1/6. Catalyzes the NADPH-dependent rearrangement and reduction of 1-deoxy-D-xylulose-5-phosphate (DXP) to 2-C-methyl-D-erythritol 4-phosphate (MEP). The sequence is that of 1-deoxy-D-xylulose 5-phosphate reductoisomerase from Serratia proteamaculans (strain 568).